The chain runs to 238 residues: Large ribosomal subunit protein uL1 (238 aa).

Belongs to the universal ribosomal protein uL1 family. Part of the 50S ribosomal subunit.

Its function is as follows. Binds directly to 23S rRNA. The L1 stalk is quite mobile in the ribosome, and is involved in E site tRNA release. Functionally, protein L1 is also a translational repressor protein, it controls the translation of the L11 operon by binding to its mRNA. This Rippkaea orientalis (strain PCC 8801 / RF-1) (Cyanothece sp. (strain PCC 8801)) protein is Large ribosomal subunit protein uL1.